The following is a 283-amino-acid chain: Flagellar filament 35 kDa core protein (283 aa).

It belongs to the bacterial flagellin family. The flagellum consists of two outer layers around a core that contains several antigenically related polypeptides.

It is found in the periplasmic flagellum. The protein resides in the periplasm. In terms of biological role, component of the core of the flagella. This is Flagellar filament 35 kDa core protein (flaB) from Leptospira interrogans serogroup Icterohaemorrhagiae serovar Lai (strain 56601).